A 5162-amino-acid polypeptide reads, in one-letter code: Linear gramicidin synthase subunit B (5162 aa).

4 Carrier domains span residues 963 to 1038 (APRN…QALR), 2027 to 2101 (EPQS…VVLE), 3541 to 3616 (APRN…GAIG), and 4601 to 4675 (AATS…GQST). Serine 998, serine 2062, serine 3576, and serine 4636 each carry O-(pantetheine 4'-phosphoryl)serine.

This sequence belongs to the ATP-dependent AMP-binding enzyme family. In terms of assembly, large multienzyme complex composed of 4 subunits; LgrA, LgrB, LgrC and LgrD. Requires pantetheine 4'-phosphate as cofactor.

Activates the 3rd to 6th amino acids (Ala, D-Leu, Ala and D-Val) in linear gramicidin and catalyzes the formation of the peptide bond between them. This enzyme is also responsible for the epimerization of the 4th (D-Leu) and the 6th (D-Val) amino acids. The protein is Linear gramicidin synthase subunit B (lgrB) of Brevibacillus parabrevis.